A 477-amino-acid polypeptide reads, in one-letter code: Tyrosine--tRNA ligase, mitochondrial (477 aa).

Residues 1 to 16 constitute a mitochondrion transit peptide; that stretch reads MAAPILRSFSWGRWSG. Y77 contacts L-tyrosine. D81 contributes to the ATP binding site. The short motif at 82-91 is the 'HIGH' region element; that stretch reads PTADSLHVGH. L-tyrosine contacts are provided by D121, Y221, Q225, and D228. ATP is bound at residue 244 to 246; the sequence is GSD. Q247 provides a ligand contact to L-tyrosine. Residues I274 and K284 each coordinate ATP. The 'KMSKS' region motif lies at 281–285; the sequence is KLGKS. K355 and K367 each carry N6-acetyllysine.

Belongs to the class-I aminoacyl-tRNA synthetase family. As to quaternary structure, homodimer.

The protein resides in the mitochondrion matrix. It carries out the reaction tRNA(Tyr) + L-tyrosine + ATP = L-tyrosyl-tRNA(Tyr) + AMP + diphosphate + H(+). Functionally, catalyzes the attachment of tyrosine to tRNA(Tyr) in a two-step reaction: tyrosine is first activated by ATP to form Tyr-AMP and then transferred to the acceptor end of tRNA(Tyr). The chain is Tyrosine--tRNA ligase, mitochondrial (YARS2) from Homo sapiens (Human).